The following is an 838-amino-acid chain: Pentatricopeptide repeat-containing protein At4g19440, chloroplastic (838 aa).

Residues 1–32 constitute a chloroplast transit peptide; it reads MAALLYFPKISSQMTSSHFISFSPMDLRRLSR. PPR repeat units follow at residues 238–268, 272–306, 307–341, 342–376, 377–411, 412–446, 447–481, 482–516, 517–551, 552–586, 587–621, 622–656, 657–691, 692–726, 727–761, and 762–796; these read SKTT…VCKG, DVYL…GVAP, NVVT…GMEP, TLIT…GFPP, NVIV…GLSL, TSST…GFNV, NQGS…NMSP, GGGL…GFVV, DTRT…GCVM, DRVS…GLKP, DNYT…GMLP, DVYT…NVQP, NTVV…GISP, NSAT…GLEP, NVFH…NVHP, and NKIT…GIVP.

This sequence belongs to the PPR family. P subfamily.

It localises to the plastid. The protein localises to the chloroplast. The chain is Pentatricopeptide repeat-containing protein At4g19440, chloroplastic from Arabidopsis thaliana (Mouse-ear cress).